Reading from the N-terminus, the 241-residue chain is Purine nucleoside phosphorylase DeoD-type (241 aa).

Position 5 (His-5) interacts with a purine D-ribonucleoside. Phosphate is bound by residues Gly-21, Arg-25, Arg-44, and 88 to 91 (RVGS). A purine D-ribonucleoside-binding positions include 180–182 (EME) and 204–205 (SD). Asp-205 serves as the catalytic Proton donor.

This sequence belongs to the PNP/UDP phosphorylase family. In terms of assembly, homohexamer; trimer of homodimers.

The enzyme catalyses a purine D-ribonucleoside + phosphate = a purine nucleobase + alpha-D-ribose 1-phosphate. It catalyses the reaction a purine 2'-deoxy-D-ribonucleoside + phosphate = a purine nucleobase + 2-deoxy-alpha-D-ribose 1-phosphate. Its function is as follows. Catalyzes the reversible phosphorolytic breakdown of the N-glycosidic bond in the beta-(deoxy)ribonucleoside molecules, with the formation of the corresponding free purine bases and pentose-1-phosphate. This chain is Purine nucleoside phosphorylase DeoD-type, found in Yersinia enterocolitica serotype O:8 / biotype 1B (strain NCTC 13174 / 8081).